We begin with the raw amino-acid sequence, 242 residues long: Glucosamine-6-phosphate deaminase (242 aa).

Asp-67 (proton acceptor; for enolization step) is an active-site residue. The For ring-opening step role is filled by Asn-136. His-138 functions as the Proton acceptor; for ring-opening step in the catalytic mechanism. Glu-143 serves as the catalytic For ring-opening step.

This sequence belongs to the glucosamine/galactosamine-6-phosphate isomerase family. NagB subfamily.

The enzyme catalyses alpha-D-glucosamine 6-phosphate + H2O = beta-D-fructose 6-phosphate + NH4(+). It functions in the pathway amino-sugar metabolism; N-acetylneuraminate degradation; D-fructose 6-phosphate from N-acetylneuraminate: step 5/5. Functionally, catalyzes the reversible isomerization-deamination of glucosamine 6-phosphate (GlcN6P) to form fructose 6-phosphate (Fru6P) and ammonium ion. The polypeptide is Glucosamine-6-phosphate deaminase (Clostridium perfringens (strain ATCC 13124 / DSM 756 / JCM 1290 / NCIMB 6125 / NCTC 8237 / Type A)).